The following is a 423-amino-acid chain: Protein CLP1 homolog (423 aa).

ATP-binding positions include Glu-19, Lys-60, and 122–127 (DVGKTT).

The protein belongs to the Clp1 family. Clp1 subfamily.

Its subcellular location is the nucleus. Required for endonucleolytic cleavage during polyadenylation-dependent pre-mRNA 3'-end formation. This is Protein CLP1 homolog (cbc) from Anopheles gambiae (African malaria mosquito).